The primary structure comprises 1439 residues: Fanconi anemia group A protein homolog (1439 aa).

Residues 1–20 (MPGSPARGAAMGGGPRGLRK) form a disordered region. A Nuclear localization signal motif is present at residues 19-35 (RKTWTELLAGRVKKQKY).

Belongs to the multisubunit FA complex composed of FANCA, FANCB, FANCC, FANCE, FANCF, FANCG, FANCL/PHF9 and FANCM. In complex with FANCF, FANCG and FANCL, but not with FANCC, nor FANCE, interacts with HES1; this interaction may be essential for the stability and nuclear localization of FA core complex proteins. The complex with FANCC and FANCG may also include EIF2AK2 and HSP70. Interacts with FAAP20; interaction is direct. In terms of processing, phosphorylated primarily on serine residues. Phosphorylation is required for the formation of the nuclear complex. As to expression, mainly expressed in testis and lymphoid tissues like thymus, lymph nodes, and spleen, and at lower levels in kidney and ovary.

It is found in the nucleus. The protein localises to the cytoplasm. In terms of biological role, DNA repair protein that may operate in a postreplication repair or a cell cycle checkpoint function. May be involved in interstrand DNA cross-link repair and in the maintenance of normal chromosome stability. The protein is Fanconi anemia group A protein homolog (Fanca) of Mus musculus (Mouse).